Reading from the N-terminus, the 328-residue chain is Glucan endo-1,3-beta-glucosidase, basic isoform 3 (328 aa).

Glutamate 85 acts as the Proton donor in catalysis. The active-site Nucleophile is the glutamate 230. A propeptide spans 306–328 (removed in mature form); it reads VSERVWDISAETNSTTSSLISEM. N-linked (GlcNAc...) asparagine glycosylation is present at asparagine 318.

The protein belongs to the glycosyl hydrolase 17 family.

Its subcellular location is the vacuole. It catalyses the reaction Hydrolysis of (1-&gt;3)-beta-D-glucosidic linkages in (1-&gt;3)-beta-D-glucans.. Functionally, is thought to be an important plant defense-related product against fungal pathogens. The sequence is that of Glucan endo-1,3-beta-glucosidase, basic isoform 3 (GLUB3) from Solanum tuberosum (Potato).